The following is a 270-amino-acid chain: Tryptophan synthase alpha chain (270 aa).

Active-site proton acceptor residues include Glu60 and Asp71.

This sequence belongs to the TrpA family. In terms of assembly, tetramer of two alpha and two beta chains.

It carries out the reaction (1S,2R)-1-C-(indol-3-yl)glycerol 3-phosphate + L-serine = D-glyceraldehyde 3-phosphate + L-tryptophan + H2O. It functions in the pathway amino-acid biosynthesis; L-tryptophan biosynthesis; L-tryptophan from chorismate: step 5/5. Functionally, the alpha subunit is responsible for the aldol cleavage of indoleglycerol phosphate to indole and glyceraldehyde 3-phosphate. The protein is Tryptophan synthase alpha chain of Deinococcus radiodurans (strain ATCC 13939 / DSM 20539 / JCM 16871 / CCUG 27074 / LMG 4051 / NBRC 15346 / NCIMB 9279 / VKM B-1422 / R1).